A 714-amino-acid chain; its full sequence is VIN3-like protein 2 (714 aa).

The PHD-type zinc finger occupies 164–232; the sequence is RCSCCICRKY…CFYCVSCGKA (69 aa). Residues 239–246 carry the Nuclear localization signal motif; sequence WKKQLTIA. The Fibronectin type-III domain maps to 366 to 463; sequence GSTKIRFEDV…INVLTRSAEE (98 aa). Residues 478–498 are compositionally biased toward polar residues; it reads LTNCSTLSSNPSSVEAESNND. Residues 478-530 form a disordered region; it reads LTNCSTLSSNPSSVEAESNNDYIVPKKPSSKNEDNNSPSVDESAAKRMKRTTD. The VIN3-Interacting Domain (VID) stretch occupies residues 602-714; it reads SMKDNCNNGD…PSGFCMKLWH (113 aa).

As to quaternary structure, self-interacts. Interacts with VIN3 and VIL1. Component of the plant homeodomain / polycomb repressive complex 2 (PHD-PRC2) large complex during prolonged cold, composed of core PRC2 components (VRN2, EZA1, FIE and MSI1), and three related PHD finger proteins (VIL1, VIL2 and VIN3) that mediates histone H3 trimethylation on 'Lys-27' (H3K27me3).

The protein resides in the nucleus. Maybe involved in both the vernalization and photoperiod pathways by regulating gene expression. Binds preferentially to dimethylated histone H3 'Lys-9' (H3K9me2). Promotes flowering in non-inductive photoperiods (e.g. short days) through the maintenance of the epigenetically repressed state of MAF5 via H3K9me2 and plant homeodomain / polycomb repressive complex 2 (PHD-PRC2)-dependent H3K27me3. This Arabidopsis thaliana (Mouse-ear cress) protein is VIN3-like protein 2 (VIL2).